Consider the following 153-residue polypeptide: 6,7-dimethyl-8-ribityllumazine synthase (153 aa).

5-amino-6-(D-ribitylamino)uracil is bound by residues phenylalanine 22, 56–58, and 80–82; these read AFE and AVI. Residue 85 to 86 participates in (2S)-2-hydroxy-3-oxobutyl phosphate binding; that stretch reads AT. Histidine 88 acts as the Proton donor in catalysis. Phenylalanine 113 serves as a coordination point for 5-amino-6-(D-ribitylamino)uracil. Arginine 127 is a (2S)-2-hydroxy-3-oxobutyl phosphate binding site.

Belongs to the DMRL synthase family.

It carries out the reaction (2S)-2-hydroxy-3-oxobutyl phosphate + 5-amino-6-(D-ribitylamino)uracil = 6,7-dimethyl-8-(1-D-ribityl)lumazine + phosphate + 2 H2O + H(+). Its pathway is cofactor biosynthesis; riboflavin biosynthesis; riboflavin from 2-hydroxy-3-oxobutyl phosphate and 5-amino-6-(D-ribitylamino)uracil: step 1/2. Catalyzes the formation of 6,7-dimethyl-8-ribityllumazine by condensation of 5-amino-6-(D-ribitylamino)uracil with 3,4-dihydroxy-2-butanone 4-phosphate. This is the penultimate step in the biosynthesis of riboflavin. This is 6,7-dimethyl-8-ribityllumazine synthase from Clostridium tetani (strain Massachusetts / E88).